Consider the following 255-residue polypeptide: Aliphatic sulfonates import ATP-binding protein SsuB (255 aa).

The ABC transporter domain occupies 12–233 (LLLNAVSKHY…RLGSVRLAEL (222 aa)). Position 44–51 (44–51 (GRSGGGKS)) interacts with ATP.

It belongs to the ABC transporter superfamily. Aliphatic sulfonates importer (TC 3.A.1.17.2) family. As to quaternary structure, the complex is composed of two ATP-binding proteins (SsuB), two transmembrane proteins (SsuC) and a solute-binding protein (SsuA).

It is found in the cell inner membrane. The enzyme catalyses ATP + H2O + aliphatic sulfonate-[sulfonate-binding protein]Side 1 = ADP + phosphate + aliphatic sulfonateSide 2 + [sulfonate-binding protein]Side 1.. In terms of biological role, part of the ABC transporter complex SsuABC involved in aliphatic sulfonates import. Responsible for energy coupling to the transport system. The polypeptide is Aliphatic sulfonates import ATP-binding protein SsuB (Shigella sonnei (strain Ss046)).